A 409-amino-acid polypeptide reads, in one-letter code: DNA primase DnaG (409 aa).

The region spanning Asp175–Ile261 is the Toprim domain. The Mg(2+) site is built by Glu181, Asp223, and Asp225. Basic and acidic residues predominate over residues Glu280–Lys289. A disordered region spans residues Glu280 to Leu322. Residues Gly290–Arg314 show a composition bias toward basic residues.

This sequence belongs to the archaeal DnaG primase family. As to quaternary structure, forms a ternary complex with MCM helicase and DNA. Component of the archaeal exosome complex. Mg(2+) is required as a cofactor.

The catalysed reaction is ssDNA + n NTP = ssDNA/pppN(pN)n-1 hybrid + (n-1) diphosphate.. Functionally, RNA polymerase that catalyzes the synthesis of short RNA molecules used as primers for DNA polymerase during DNA replication. Also part of the exosome, which is a complex involved in RNA degradation. Acts as a poly(A)-binding protein that enhances the interaction between heteromeric, adenine-rich transcripts and the exosome. The protein is DNA primase DnaG of Methanopyrus kandleri (strain AV19 / DSM 6324 / JCM 9639 / NBRC 100938).